Reading from the N-terminus, the 372-residue chain is Histidinol-phosphate aminotransferase (372 aa).

At lysine 229 the chain carries N6-(pyridoxal phosphate)lysine.

The protein belongs to the class-II pyridoxal-phosphate-dependent aminotransferase family. Histidinol-phosphate aminotransferase subfamily. In terms of assembly, homodimer. It depends on pyridoxal 5'-phosphate as a cofactor.

The catalysed reaction is L-histidinol phosphate + 2-oxoglutarate = 3-(imidazol-4-yl)-2-oxopropyl phosphate + L-glutamate. It functions in the pathway amino-acid biosynthesis; L-histidine biosynthesis; L-histidine from 5-phospho-alpha-D-ribose 1-diphosphate: step 7/9. This Bdellovibrio bacteriovorus (strain ATCC 15356 / DSM 50701 / NCIMB 9529 / HD100) protein is Histidinol-phosphate aminotransferase.